Reading from the N-terminus, the 535-residue chain is PAC-1 interacting and coiled-coil domain-containing protein 1 (535 aa).

A disordered region spans residues 1-67; that stretch reads MIITTPRRAN…KQTPPRSPVI (67 aa). The segment covering 36-57 has biased composition (low complexity); sequence SSTTPSSIGSSSSSSSSYASST. Coiled-coil stretches lie at residues 109-172 and 198-242; these read KLQY…RDLS and SLMK…RQSL. 2 disordered regions span residues 254-277 and 503-535; these read NESE…NDEE and TCRP…HTHN. Positions 503–525 are enriched in polar residues; it reads TCRPTTTLISSTQPAQRSVSVEK. Low complexity predominate over residues 526–535; that stretch reads NNNNNVHTHN.

It belongs to the CCDC85 family. As to quaternary structure, interacts with pac-1 and jac-1.

The protein localises to the cell junction. It localises to the adherens junction. Functionally, linker protein which helps to recruit the Rho GTPase-activating protein, pac-1, to adherens junctions. The chain is PAC-1 interacting and coiled-coil domain-containing protein 1 from Caenorhabditis elegans.